The following is a 1060-amino-acid chain: Carbamoyl phosphate synthase large chain (1060 aa).

Residues 1–401 are carboxyphosphate synthetic domain; the sequence is MPKRQDIHKI…SLLKAVRSLE (401 aa). ATP-binding residues include R129, R169, G175, G176, R208, I210, E215, G241, V242, H243, Q284, and E298. An ATP-grasp 1 domain is found at 133–327; that stretch reads KNLMQKLHEP…IAKMAAKIAV (195 aa). The Mg(2+) site is built by Q284, E298, and N300. Mn(2+) is bound by residues Q284, E298, and N300. The interval 402-546 is oligomerization domain; it reads VGLIHPERPA…YSTYESSTES (145 aa). Residues 547 to 929 are carbamoyl phosphate synthetic domain; that stretch reads VKSDKPSVLV…ALYKAFEAAG (383 aa). In terms of domain architecture, ATP-grasp 2 spans 671–861; it reads DQVIKSLKLP…LAQVATLAIL (191 aa). ATP is bound by residues R707, H746, L748, E752, G777, I778, H779, S780, Q820, and E832. Mg(2+) contacts are provided by Q820, E832, and N834. Residues Q820, E832, and N834 each contribute to the Mn(2+) site. The MGS-like domain occupies 930 to 1060; the sequence is MHLPQFGRAL…QAFSISPIKS (131 aa). Positions 930–1060 are allosteric domain; that stretch reads MHLPQFGRAL…QAFSISPIKS (131 aa).

This sequence belongs to the CarB family. Composed of two chains; the small (or glutamine) chain promotes the hydrolysis of glutamine to ammonia, which is used by the large (or ammonia) chain to synthesize carbamoyl phosphate. Tetramer of heterodimers (alpha,beta)4. The cofactor is Mg(2+). Requires Mn(2+) as cofactor.

The enzyme catalyses hydrogencarbonate + L-glutamine + 2 ATP + H2O = carbamoyl phosphate + L-glutamate + 2 ADP + phosphate + 2 H(+). It catalyses the reaction hydrogencarbonate + NH4(+) + 2 ATP = carbamoyl phosphate + 2 ADP + phosphate + 2 H(+). Its pathway is amino-acid biosynthesis; L-arginine biosynthesis; carbamoyl phosphate from bicarbonate: step 1/1. It functions in the pathway pyrimidine metabolism; UMP biosynthesis via de novo pathway; (S)-dihydroorotate from bicarbonate: step 1/3. In terms of biological role, large subunit of the glutamine-dependent carbamoyl phosphate synthetase (CPSase). CPSase catalyzes the formation of carbamoyl phosphate from the ammonia moiety of glutamine, carbonate, and phosphate donated by ATP, constituting the first step of 2 biosynthetic pathways, one leading to arginine and/or urea and the other to pyrimidine nucleotides. The large subunit (synthetase) binds the substrates ammonia (free or transferred from glutamine from the small subunit), hydrogencarbonate and ATP and carries out an ATP-coupled ligase reaction, activating hydrogencarbonate by forming carboxy phosphate which reacts with ammonia to form carbamoyl phosphate. This is Carbamoyl phosphate synthase large chain from Lacticaseibacillus casei (strain BL23) (Lactobacillus casei).